The following is a 354-amino-acid chain: Muscleblind-like protein 3 (354 aa).

C3H1-type zinc fingers lie at residues Trp-14 to Arg-42, Asn-48 to Pro-74, Ser-174 to Asp-202, and Asp-210 to Ala-236.

Belongs to the muscleblind family. Highly expressed in the placenta.

It is found in the nucleus. The protein localises to the cytoplasm. Its function is as follows. Mediates pre-mRNA alternative splicing regulation. Acts either as activator or repressor of splicing on specific pre-mRNA targets. Inhibits cardiac troponin-T (TNNT2) pre-mRNA exon inclusion but induces insulin receptor (IR) pre-mRNA exon inclusion in muscle. Antagonizes the alternative splicing activity pattern of CELF proteins. May play a role in myotonic dystrophy pathophysiology (DM). Could inhibit terminal muscle differentiation, acting at approximately the time of myogenin induction. This Homo sapiens (Human) protein is Muscleblind-like protein 3 (MBNL3).